The following is a 272-amino-acid chain: Oligodendrocyte transcription factor 3 (272 aa).

A compositionally biased stretch (low complexity) spans 1-14 (MNSDSSSVSSRASS). The segment at 1 to 71 (MNSDSSSVSS…KAAGESSKYK (71 aa)) is disordered. The segment covering 24-33 (DHHHRHHHHQ) has biased composition (basic residues). Positions 36-46 (RLNSVSSTQGD) are enriched in polar residues. Positions 68–89 (SKYKIKKQLSEQDLQQLRLKIN) form a coiled coil. A bHLH domain is found at 83–137 (QLRLKINGRERKRMHDLNLAMDGLREVMPYAHGPSVRKLSKIATLLLARNYILML).

The protein resides in the nucleus. May determine the distinct specification program of class A neurons in the dorsal part of the spinal cord and suppress specification of class B neurons. This Homo sapiens (Human) protein is Oligodendrocyte transcription factor 3 (OLIG3).